The following is a 193-amino-acid chain: NADH-quinone oxidoreductase subunit B (193 aa).

Residues C72, C73, C137, and C167 each contribute to the [4Fe-4S] cluster site.

The protein belongs to the complex I 20 kDa subunit family. NDH-1 is composed of 14 different subunits. Subunits NuoB, C, D, E, F, and G constitute the peripheral sector of the complex. [4Fe-4S] cluster serves as cofactor.

It localises to the cell inner membrane. It catalyses the reaction a quinone + NADH + 5 H(+)(in) = a quinol + NAD(+) + 4 H(+)(out). In terms of biological role, NDH-1 shuttles electrons from NADH, via FMN and iron-sulfur (Fe-S) centers, to quinones in the respiratory chain. The immediate electron acceptor for the enzyme in this species is believed to be ubiquinone. Couples the redox reaction to proton translocation (for every two electrons transferred, four hydrogen ions are translocated across the cytoplasmic membrane), and thus conserves the redox energy in a proton gradient. This is NADH-quinone oxidoreductase subunit B from Rhizobium rhizogenes (strain K84 / ATCC BAA-868) (Agrobacterium radiobacter).